We begin with the raw amino-acid sequence, 296 residues long: Transcription factor MYB72 (296 aa).

2 HTH myb-type domains span residues 11–63 (KNKV…INYL) and 64–118 (RPDV…KKRL). DNA-binding regions (H-T-H motif) lie at residues 39-63 (WRSL…INYL) and 91-114 (WSKI…NTHL). A disordered region spans residues 118-144 (LTPSSSSSSLSSTHDQSTKADHDKNCD). Over residues 133-144 (QSTKADHDKNCD) the composition is skewed to basic and acidic residues.

In terms of assembly, interacts with EIL3.

The protein localises to the nucleus. Involved in metal ions homeostasis, including iron ions (Fe) acquisition, via the regulation of NAS4 and NAS2 genes expression. Necessary for plant survival in alkaline soil where iron availability is greatly restricted. Involved in the up-regulation of several biosynthesis genes of secondary metabolites involved in iron uptake under conditions of iron deficiency. Triggers tolerance to nickel (Ni) and zinc (Zn) ions. Required in the roots during early signaling steps of rhizobacteria-mediated (e.g. P.fluorescens WCS417r) and beneficial fungi-mediated (e.g. T.asperellum T34) broad-spectrum induced systemic resistance (ISR) against several pathogens (e.g. P.syringae pv tomato, H.parasitica, P.cucumerina, A.brassicicola and B.cinerea) and implying enhanced callose deposition. Required for the induction of some genes (e.g. BGLU42) upon rhizobacteria-mediated ISR. This Arabidopsis thaliana (Mouse-ear cress) protein is Transcription factor MYB72.